The following is a 786-amino-acid chain: Progesterone receptor (786 aa).

Residues 1–10 are compositionally biased toward basic and acidic residues; the sequence is MTEVKSKETR. Disordered regions lie at residues 1–95, 110–212, and 252–279; these read MTEV…SKDC, AAPW…ASPA, and SAFGPRSSPSVPAADLAEYGYPPPDGKE. A modulating, Pro-Rich region spans residues 1 to 420; sequence MTEVKSKETR…YSFESLPQKI (420 aa). Lys7 is covalently cross-linked (Glycyl lysine isopeptide (Lys-Gly) (interchain with G-Cter in SUMO)). Positions 48 to 79 are enriched in acidic residues; sequence DEEEEEEENEEEEEEEEPQQREEEEEEEEEDR. A compositionally biased stretch (pro residues) spans 143 to 154; the sequence is APGPSQPRPGAP. The span at 186–197 shows a compositional bias: basic and acidic residues; the sequence is AEERGFPERDAG. Residues 203–212 show a composition bias toward low complexity; the sequence is LAPAAAASPA. Residues Ser210 and Ser259 each carry the phosphoserine modification. A Glycyl lysine isopeptide (Lys-Gly) (interchain with G-Cter in SUMO); alternate cross-link involves residue Lys294. A Glycyl lysine isopeptide (Lys-Gly) (interchain with G-Cter in ubiquitin); alternate cross-link involves residue Lys294. Lys385 participates in a covalent cross-link: Glycyl lysine isopeptide (Lys-Gly) (interchain with G-Cter in SUMO). 2 NR C4-type zinc fingers span residues 421–441 and 457–481; these read CLICGDEASGCHYGVLTCGSC and CAGRNDCIVDKIRRKNCPACRLRKC. The nuclear receptor DNA-binding region spans 421–486; it reads CLICGDEASG…RLRKCCQAGM (66 aa). Ser529 is subject to Phosphoserine. Residues 532–766 form the NR LBD domain; that stretch reads QEIPFVPPMI…EFPEMMSEVI (235 aa).

This sequence belongs to the nuclear hormone receptor family. NR3 subfamily. Phosphorylation of Ser-529 is sharply increased upon progesterone treatment, whereas phosphorylation of Ser-210 and Ser-259 is modestly induced by progesterone. In terms of processing, ubiquitinated. Ubiquitination is increased by progesterone and represses sumoylation at the same site. Post-translationally, sumoylation is hormone-dependent and represses transcriptional activity. Sumoylation on all three sites is enhanced by PIAS3. Desumoylated by SENP1. Sumoylation on Lys-385, the main site of sumoylation, is repressed by ubiquitination on the same site. In terms of tissue distribution, oviduct and bursa of Fabricius.

The protein resides in the nucleus. It localises to the cytoplasm. In terms of biological role, the steroid hormones and their receptors are involved in the regulation of eukaryotic gene expression and affect cellular proliferation and differentiation in target tissues. In Gallus gallus (Chicken), this protein is Progesterone receptor (PGR).